The chain runs to 100 residues: NADH-quinone oxidoreductase subunit K (100 aa).

A run of 3 helical transmembrane segments spans residues 2 to 22 (IPLSWYMALATVLFCIGVAGF), 28 to 48 (IIVMLLSLELMLNGVNLNLVA), and 64 to 84 (FVITVAACEAAVGLGIVICLF).

Belongs to the complex I subunit 4L family. NDH-1 is composed of 14 different subunits. Subunits NuoA, H, J, K, L, M, N constitute the membrane sector of the complex.

It localises to the cell inner membrane. The catalysed reaction is a quinone + NADH + 5 H(+)(in) = a quinol + NAD(+) + 4 H(+)(out). In terms of biological role, NDH-1 shuttles electrons from NADH, via FMN and iron-sulfur (Fe-S) centers, to quinones in the respiratory chain. The immediate electron acceptor for the enzyme in this species is believed to be ubiquinone. Couples the redox reaction to proton translocation (for every two electrons transferred, four hydrogen ions are translocated across the cytoplasmic membrane), and thus conserves the redox energy in a proton gradient. This Desulfovibrio desulfuricans (strain ATCC 27774 / DSM 6949 / MB) protein is NADH-quinone oxidoreductase subunit K.